Reading from the N-terminus, the 87-residue chain is Small ribosomal subunit protein bS18 (87 aa).

It belongs to the bacterial ribosomal protein bS18 family. In terms of assembly, part of the 30S ribosomal subunit. Forms a tight heterodimer with protein bS6.

Its function is as follows. Binds as a heterodimer with protein bS6 to the central domain of the 16S rRNA, where it helps stabilize the platform of the 30S subunit. This is Small ribosomal subunit protein bS18 from Sulfurovum sp. (strain NBC37-1).